The chain runs to 864 residues: Arf-GAP with GTPase, ANK repeat and PH domain-containing protein 1 (864 aa).

Positions 66–276 are small GTPase-like; that stretch reads SRSVPELKVG…QTSNGGGSLS (211 aa). The 175-residue stretch at 67 to 241 folds into the GLD domain; the sequence is RSVPELKVGI…TRKKQQLSIG (175 aa). GTP-binding positions include 78 to 85, 122 to 126, and 178 to 181; these read GNLASGKS, IRDEG, and TQDA. Disordered stretches follow at residues 266 to 343, 405 to 455, and 499 to 549; these read SQTS…IGSG, VPGK…QMAS, and TGLG…LSST. Low complexity predominate over residues 275–289; sequence LSDYSSSVPSTPSTS. Basic and acidic residues predominate over residues 322-337; sequence KGSDPDKDKKGLESRA. The PH domain maps to 346–591; the sequence is IPIKQGMLLK…WVQAIESQIL (246 aa). Over residues 413–428 the composition is skewed to polar residues; it reads ATSSCAPVASPKTNGL. Positions 507–517 are enriched in low complexity; sequence SSPSISSTTSP. Basic residues predominate over residues 527 to 537; it reads ANRKKHRRKKS. The segment covering 538–549 has biased composition (polar residues); it reads TSNFKVDGLSST. Residues 612–732 form the Arf-GAP domain; it reads ALALQSIRNL…LFLSPLPCRD (121 aa). The C4-type zinc-finger motif lies at 627 to 650; sequence CVDCDAQSPDWASLNLGALMCIEC. 2 ANK repeats span residues 771-800 and 804-833; these read DRRT…DVMA and HGNT…PDEQ. Over residues 845-854 the composition is skewed to low complexity; that stretch reads KNNRNNNSNA. The segment at 845–864 is disordered; that stretch reads KNNRNNNSNAGGSGLMPTLI.

It belongs to the centaurin gamma-like family. As to quaternary structure, homodimer. Interacts with several subunits of the AP-3 protein complex.

Its subcellular location is the cytoplasm. Its function is as follows. GTPase-activating protein. Directly and specifically regulates the adapter protein 3 (AP-3)-dependent trafficking of proteins in the endosomal-lysosomal system. The polypeptide is Arf-GAP with GTPase, ANK repeat and PH domain-containing protein 1 (agap1) (Xenopus laevis (African clawed frog)).